Here is a 511-residue protein sequence, read N- to C-terminus: Histidine ammonia-lyase (511 aa).

The segment at residues 142–144 (ASG) is a cross-link (5-imidazolinone (Ala-Gly)). Serine 143 carries the post-translational modification 2,3-didehydroalanine (Ser).

Belongs to the PAL/histidase family. In terms of processing, contains an active site 4-methylidene-imidazol-5-one (MIO), which is formed autocatalytically by cyclization and dehydration of residues Ala-Ser-Gly.

It localises to the cytoplasm. It catalyses the reaction L-histidine = trans-urocanate + NH4(+). The protein operates within amino-acid degradation; L-histidine degradation into L-glutamate; N-formimidoyl-L-glutamate from L-histidine: step 1/3. The chain is Histidine ammonia-lyase from Brucella suis (strain ATCC 23445 / NCTC 10510).